An 83-amino-acid chain; its full sequence is Defensin-2 (83 aa).

A signal peptide spans 1–33; that stretch reads MAGKGVGTPLSALFLLVLLVVTIGMMEVQVAEG. Disulfide bonds link Cys36/Cys82, Cys47/Cys67, Cys53/Cys76, and Cys57/Cys78.

The protein belongs to the DEFL family.

Its subcellular location is the secreted. Plant defense peptide. Has antifungal activity. In Pinus sylvestris (Scotch pine), this protein is Defensin-2.